A 321-amino-acid chain; its full sequence is MMVTVIGAGSFGTAIAQVLSWNAEMVRLMARRSEVVENINRTRENSAYHPGVKLRDNIEATLMDGSVLEESEYVFMAVPSGNLRSIVRSMNSSLEDKKIVSCIKGIEHPGLKTMSSVIREETGSRTVFSISGPNFADELIRGMTSGITVGASTRYAREIAGLLKSPRIILDHSENVEGVEFCGILKNVYAVAMGILDGQITGENHRHSLLTLCFREMNLILNEMGYGELHDRFCGFGDFLLTSTTDKSRNRTLGLMLGKKMRLSEDSTITIESLRSIRAIRELTEGLELPVLEMVYQTMQEPENVNLYIREFQERISRPEF.

Positions 10, 11, 31, 32, and 104 each coordinate NADPH. Positions 104 and 132 each coordinate sn-glycerol 3-phosphate. Residue alanine 136 participates in NADPH binding. Sn-glycerol 3-phosphate contacts are provided by lysine 186, aspartate 238, serine 248, arginine 249, and asparagine 250. Lysine 186 acts as the Proton acceptor in catalysis. Arginine 249 contributes to the NADPH binding site. An NADPH-binding site is contributed by glutamate 272.

This sequence belongs to the NAD-dependent glycerol-3-phosphate dehydrogenase family.

It is found in the cytoplasm. It carries out the reaction sn-glycerol 3-phosphate + NAD(+) = dihydroxyacetone phosphate + NADH + H(+). The catalysed reaction is sn-glycerol 3-phosphate + NADP(+) = dihydroxyacetone phosphate + NADPH + H(+). Its function is as follows. Catalyzes the reduction of the glycolytic intermediate dihydroxyacetone phosphate (DHAP) to sn-glycerol 3-phosphate (G3P). The sequence is that of Glycerol-3-phosphate dehydrogenase [NAD(P)+] from Methanothermobacter thermautotrophicus (strain ATCC 29096 / DSM 1053 / JCM 10044 / NBRC 100330 / Delta H) (Methanobacterium thermoautotrophicum).